The primary structure comprises 260 residues: CD40 ligand (260 aa).

The Cytoplasmic segment spans residues 1-22; the sequence is MIETYSQPSPRSVATGLPASMK. The chain crosses the membrane as a helical; Signal-anchor for type II membrane protein span at residues 23–46; that stretch reads IFMYLLTVFLITQMIGSVLFAVYL. Residues 47–260 are Extracellular-facing; it reads HRRLDKVEEE…GFSSFGLLKL (214 aa). The THD domain maps to 121-260; the sequence is IAAHVVSEAN…GFSSFGLLKL (140 aa). A disulfide bridge links C177 with C217. The N-linked (GlcNAc...) asparagine glycan is linked to N239.

This sequence belongs to the tumor necrosis factor family. In terms of assembly, homotrimer. Interacts with CD28. CD40 ligand, soluble form: Exists as either a monomer or a homotrimer. Forms a ternary complex between CD40 and integrins for CD40-CD40LG signaling. Post-translationally, the soluble form derives from the membrane form by proteolytic processing. In terms of tissue distribution, specifically expressed on activated CD4+ T-lymphocytes.

Its subcellular location is the cell membrane. It is found in the cell surface. The protein resides in the secreted. In terms of biological role, cytokine that acts as a ligand to CD40/TNFRSF5. Costimulates T-cell proliferation and cytokine production. Its cross-linking on T-cells generates a costimulatory signal which enhances the production of IL4 and IL10 in conjunction with the TCR/CD3 ligation and CD28 costimulation. Induces the activation of NF-kappa-B. Induces the activation of kinases MAPK8 and PAK2 in T-cells. Mediates B-cell proliferation in the absence of co-stimulus as well as IgE production in the presence of IL4. Involved in immunoglobulin class switching. Functionally, acts as a ligand for integrins, specifically ITGA5:ITGB1 and ITGAV:ITGB3; both integrins and the CD40 receptor are required for activation of CD40-CD40LG signaling, which have cell-type dependent effects, such as B-cell activation, NF-kappa-B signaling and anti-apoptotic signaling. In Mus musculus (Mouse), this protein is CD40 ligand (Cd40lg).